The following is a 349-amino-acid chain: tRNA pseudouridine synthase D (349 aa).

Phe27 provides a ligand contact to substrate. Asp80 acts as the Nucleophile in catalysis. Asn129 serves as a coordination point for substrate. Positions 155–303 (GVPNYFGPQR…VEAARRAMLL (149 aa)) constitute a TRUD domain. Phe329 lines the substrate pocket.

This sequence belongs to the pseudouridine synthase TruD family.

It carries out the reaction uridine(13) in tRNA = pseudouridine(13) in tRNA. In terms of biological role, responsible for synthesis of pseudouridine from uracil-13 in transfer RNAs. This Cronobacter sakazakii (strain ATCC BAA-894) (Enterobacter sakazakii) protein is tRNA pseudouridine synthase D.